The primary structure comprises 172 residues: Propanediol dehydratase small subunit (172 aa).

Belongs to the diol/glycerol dehydratase small subunit family. The propanediol dehydratase enzyme is a heterotrimeric complex composed of a large (PduC), a medium (PduD) and a small (PduE) subunit. Requires adenosylcob(III)alamin as cofactor.

The protein resides in the bacterial microcompartment. The catalysed reaction is propane-1,2-diol = propanal + H2O. It functions in the pathway polyol metabolism; 1,2-propanediol degradation. Functionally, part of the PduCDE complex that catalyzes the dehydration of 1,2-propanediol (1,2-PD) to propionaldehyde. Localized in the bacterial microcompartment (BMC) dedicated to 1,2-PD degradation. In terms of biological role, expression of a cosmid containing the full 21-gene pdu operon in E.coli allows E.coli to grow on 1,2-propanediol (1,2-PD) with the appearance of BMCs in its cytoplasm. The 1,2-PD-specific bacterial microcompartment (BMC) concentrates low levels of 1,2-PD catabolic enzymes, concentrates volatile reaction intermediates thus enhancing pathway flux and keeps the level of toxic, mutagenic propionaldehyde low. The polypeptide is Propanediol dehydratase small subunit (Citrobacter freundii).